Here is a 1035-residue protein sequence, read N- to C-terminus: Cell-division control histidine kinase PdhS (1035 aa).

An important for polar localization region spans residues 1 to 613 (MSGSYPFIDI…HADGSEEPVD (613 aa)). Positions 500-533 (QGLANTRAESETPVSETSSIEPVEPTPPVKTRSE) are disordered. The tract at residues 614–1035 (AHLNAIAWRG…VFPPTRVLAD (422 aa)) is interaction with DivK. Residues 659–730 (HVEELKTILD…YLHGLSGNGV (72 aa)) enclose the PAS domain. The 230-residue stretch at 802–1031 (RISHEIRTPL…VVEIVFPPTR (230 aa)) folds into the Histidine kinase domain. His805 carries the post-translational modification Phosphohistidine; by autocatalysis.

Interacts with DivK.

It localises to the cytoplasm. The catalysed reaction is ATP + protein L-histidine = ADP + protein N-phospho-L-histidine.. Its function is as follows. Functions as a polar differentiation marker. Essential protein that, by localizing in the old pole of dividing cells, controls cell division and maturation, probably through control of DivK phosphorylation status and cellular distribution, which in turn regulates CtrA, a transcriptional regulator of the minB operon. The asymmetrical localization of this protein is probably required for cells to enter a new division cycle. This Brucella ovis (strain ATCC 25840 / 63/290 / NCTC 10512) protein is Cell-division control histidine kinase PdhS (pdhS).